Consider the following 325-residue polypeptide: Putative metal ion transporter ZIPCO (325 aa).

Transmembrane regions (helical) follow at residues 5–25, 46–66, and 74–94; these read TFLALLIFVECVIVVYIPAYI, IASGAILALAFLHMLPEVIIL, and LYYIFILVLVSVTFLNITDIL. N-linked (GlcNAc...) asparagine glycans are attached at residues Asn-106 and Asn-160. 4 helical membrane passes run 179–199, 239–259, 264–284, and 296–316; these read FFIVLSLFIHSFIEGLLMGSL, IYAWSFILSLPLGVFIAIFSF, FVEIIFSSIACGFFLYLSFNM, and HFISFSYFLGVGGMSTLMILF.

The protein resides in the cytoplasmic vesicle membrane. Putative transporter for the divalent zinc and iron cations. The chain is Putative metal ion transporter ZIPCO from Plasmodium falciparum (isolate 3D7).